We begin with the raw amino-acid sequence, 392 residues long: ATP phosphoribosyltransferase regulatory subunit (392 aa).

It belongs to the class-II aminoacyl-tRNA synthetase family. HisZ subfamily. In terms of assembly, heteromultimer composed of HisG and HisZ subunits.

Its subcellular location is the cytoplasm. The protein operates within amino-acid biosynthesis; L-histidine biosynthesis; L-histidine from 5-phospho-alpha-D-ribose 1-diphosphate: step 1/9. Required for the first step of histidine biosynthesis. May allow the feedback regulation of ATP phosphoribosyltransferase activity by histidine. This is ATP phosphoribosyltransferase regulatory subunit from Gloeobacter violaceus (strain ATCC 29082 / PCC 7421).